A 49-amino-acid polypeptide reads, in one-letter code: Large ribosomal subunit protein bL33 (49 aa).

The interval 18–49 (ITTKNKRNNPERLELKKYSPRLKRTTLHRETK) is disordered. The segment covering 25–34 (NNPERLELKK) has biased composition (basic and acidic residues).

It belongs to the bacterial ribosomal protein bL33 family.

This is Large ribosomal subunit protein bL33 from Lysinibacillus sphaericus (strain C3-41).